The following is a 485-amino-acid chain: MDLFDLTLHELHAKLKSKEVSSREATSAMLDRIAELEPRINAFITVTPERALAEAEAADRRIAAGEADVLTGIPLAVKDIFLTEGTLTTCGSRILNNFIPPYSATSFEKLKQRGMVLLGKLNQDEFAMGSSNESSASGPCRNPWNTDCIPGGSSGGSAAAIAARQATVTLGTDTGGSIRQPASHCGCVGLKPTYGRVSRYGVIAYASSLDQVGPLTRDVTDCAIMLGALAGHDPKDSTSVDRPVPDYQAALTNDIRGLRIGLPREYFIEGLDPDVQASMDQAIETYRRLGAEFTEISLPHTDYAVASYYLIATAEASANLARYDGVRFGHRAEQAEGLLEMYSRSRSQGFGSEVKRRIMLGTYALSSGYYDAYYLKAQKVRTLIMADFIQAFEGVDLILTPVAPTPAFRIGEKVNDPLQMYLSDIFTIPVNLAGTCAMSLPAGISGQGLPIGVQLIGKPFGEETILRAAHAFEQATEWHSLRAPL.

Residues lysine 78 and serine 153 each act as charge relay system in the active site. The active-site Acyl-ester intermediate is serine 177.

The protein belongs to the amidase family. GatA subfamily. As to quaternary structure, heterotrimer of A, B and C subunits.

The catalysed reaction is L-glutamyl-tRNA(Gln) + L-glutamine + ATP + H2O = L-glutaminyl-tRNA(Gln) + L-glutamate + ADP + phosphate + H(+). In terms of biological role, allows the formation of correctly charged Gln-tRNA(Gln) through the transamidation of misacylated Glu-tRNA(Gln) in organisms which lack glutaminyl-tRNA synthetase. The reaction takes place in the presence of glutamine and ATP through an activated gamma-phospho-Glu-tRNA(Gln). This Pelobacter propionicus (strain DSM 2379 / NBRC 103807 / OttBd1) protein is Glutamyl-tRNA(Gln) amidotransferase subunit A.